The primary structure comprises 117 residues: Large ribosomal subunit protein bL20 (117 aa).

Belongs to the bacterial ribosomal protein bL20 family.

Its function is as follows. Binds directly to 23S ribosomal RNA and is necessary for the in vitro assembly process of the 50S ribosomal subunit. It is not involved in the protein synthesizing functions of that subunit. This Brachyspira hyodysenteriae (strain ATCC 49526 / WA1) protein is Large ribosomal subunit protein bL20.